The following is a 341-amino-acid chain: MKFVDEALIKVEAGKGGNGCLSFRREKFIPRGGPDGGDGGDGGSIYFEASSDLNTLIDFRYTRQYKAENGQSGMGGNCTGKKGEDLTIKVPVGTMVYDADTGELLADISQPGVPVLIAQGGFHGLGNTRYKSSVNRSPRQTTPGSPGESRNLRLELRVLADVGLLGLPNAGKSTLIRAVSSSKAKVADYPFTTLHPGLGVVRVSPYKSFVMADIPGLIEGAAQGAGLGHRFLKHLSRTCVLLHVIDIAPLDGSDPVADAKAILNELTQYNPDLLNKPRWLVLNKIDMLPDEKEREEKIQSIIKGLKWKDKVFSISAIESKGTQELCYALMQLIDEMKESEA.

The region spanning 1-159 is the Obg domain; it reads MKFVDEALIK…RNLRLELRVL (159 aa). The disordered stretch occupies residues 128 to 150; that stretch reads TRYKSSVNRSPRQTTPGSPGESR. Positions 129-144 are enriched in polar residues; it reads RYKSSVNRSPRQTTPG. The OBG-type G domain maps to 160 to 334; the sequence is ADVGLLGLPN…LCYALMQLID (175 aa). Residues 166–173, 191–195, 213–216, 283–286, and 315–317 contribute to the GTP site; these read GLPNAGKS, FTTLH, DIPG, NKID, and SAI. 2 residues coordinate Mg(2+): serine 173 and threonine 193.

Belongs to the TRAFAC class OBG-HflX-like GTPase superfamily. OBG GTPase family. As to quaternary structure, monomer. It depends on Mg(2+) as a cofactor.

The protein localises to the cytoplasm. Functionally, an essential GTPase which binds GTP, GDP and possibly (p)ppGpp with moderate affinity, with high nucleotide exchange rates and a fairly low GTP hydrolysis rate. Plays a role in control of the cell cycle, stress response, ribosome biogenesis and in those bacteria that undergo differentiation, in morphogenesis control. This chain is GTPase Obg, found in Legionella pneumophila (strain Paris).